The chain runs to 266 residues: 3-methyl-2-oxobutanoate hydroxymethyltransferase (266 aa).

Positions 47 and 86 each coordinate Mg(2+). 3-methyl-2-oxobutanoate-binding positions include 47-48, aspartate 86, and lysine 114; that span reads DS. Mg(2+) is bound at residue glutamate 116. Glutamate 183 (proton acceptor) is an active-site residue.

This sequence belongs to the PanB family. As to quaternary structure, homodecamer; pentamer of dimers. Mg(2+) is required as a cofactor.

The protein localises to the cytoplasm. It carries out the reaction 3-methyl-2-oxobutanoate + (6R)-5,10-methylene-5,6,7,8-tetrahydrofolate + H2O = 2-dehydropantoate + (6S)-5,6,7,8-tetrahydrofolate. It participates in cofactor biosynthesis; (R)-pantothenate biosynthesis; (R)-pantoate from 3-methyl-2-oxobutanoate: step 1/2. Functionally, catalyzes the reversible reaction in which hydroxymethyl group from 5,10-methylenetetrahydrofolate is transferred onto alpha-ketoisovalerate to form ketopantoate. In Idiomarina loihiensis (strain ATCC BAA-735 / DSM 15497 / L2-TR), this protein is 3-methyl-2-oxobutanoate hydroxymethyltransferase.